The sequence spans 88 residues: Gene 86 protein (88 aa).

The disordered stretch occupies residues 64-88 (WRGNPSAYDDEVGDLEGFETQHSDY). Acidic residues predominate over residues 71-80 (YDDEVGDLEG).

The protein is Gene 86 protein (86) of Mycobacterium (Mycobacteriophage L5).